The sequence spans 143 residues: Nucleoside diphosphate kinase (143 aa).

6 residues coordinate ATP: Lys11, Phe59, Arg87, Thr93, Arg104, and Asn114. The active-site Pros-phosphohistidine intermediate is the His117.

It belongs to the NDK family. Homotetramer. Mg(2+) serves as cofactor.

The protein localises to the cytoplasm. It catalyses the reaction a 2'-deoxyribonucleoside 5'-diphosphate + ATP = a 2'-deoxyribonucleoside 5'-triphosphate + ADP. It carries out the reaction a ribonucleoside 5'-diphosphate + ATP = a ribonucleoside 5'-triphosphate + ADP. Major role in the synthesis of nucleoside triphosphates other than ATP. The ATP gamma phosphate is transferred to the NDP beta phosphate via a ping-pong mechanism, using a phosphorylated active-site intermediate. This chain is Nucleoside diphosphate kinase, found in Enterobacter sp. (strain 638).